Consider the following 77-residue polypeptide: Small ribosomal subunit protein uS17 (77 aa).

This sequence belongs to the universal ribosomal protein uS17 family. In terms of assembly, part of the 30S ribosomal subunit.

In terms of biological role, one of the primary rRNA binding proteins, it binds specifically to the 5'-end of 16S ribosomal RNA. This is Small ribosomal subunit protein uS17 from Rickettsia prowazekii (strain Madrid E).